Consider the following 89-residue polypeptide: MALSTEKKAEILKEYGLHETDTGSPEAQVALLTSRINNLTEHLKDHKHDHHSRRGLLLMVGRRRGLLKYLAANDVDRYRDLISRLGLRR.

Belongs to the universal ribosomal protein uS15 family. In terms of assembly, part of the 30S ribosomal subunit. Forms a bridge to the 50S subunit in the 70S ribosome, contacting the 23S rRNA.

One of the primary rRNA binding proteins, it binds directly to 16S rRNA where it helps nucleate assembly of the platform of the 30S subunit by binding and bridging several RNA helices of the 16S rRNA. Its function is as follows. Forms an intersubunit bridge (bridge B4) with the 23S rRNA of the 50S subunit in the ribosome. The polypeptide is Small ribosomal subunit protein uS15 (Corynebacterium aurimucosum (strain ATCC 700975 / DSM 44827 / CIP 107346 / CN-1) (Corynebacterium nigricans)).